The chain runs to 595 residues: UvrABC system protein C (595 aa).

Residues 14–91 (SNPGCYLHKD…IQENMPKFNI (78 aa)) enclose the GIY-YIG domain. The 36-residue stretch at 196–231 (DKIVNQLKAKMKDMSDQMEFERAAEYRDLIEAVSTL) folds into the UVR domain.

Belongs to the UvrC family. Interacts with UvrB in an incision complex.

The protein resides in the cytoplasm. In terms of biological role, the UvrABC repair system catalyzes the recognition and processing of DNA lesions. UvrC both incises the 5' and 3' sides of the lesion. The N-terminal half is responsible for the 3' incision and the C-terminal half is responsible for the 5' incision. In Streptococcus thermophilus (strain CNRZ 1066), this protein is UvrABC system protein C.